The chain runs to 572 residues: NADH-ubiquinone oxidoreductase chain 5 (572 aa).

16 consecutive transmembrane segments (helical) span residues 4–24 (ISFV…LYFL), 44–64 (IVMT…VLMI), 86–106 (IMLV…PNLI), 107–127 (SILL…IYFQ), 147–167 (VALL…YIFY), 170–190 (IMQN…AAMT), 217–237 (SSTL…ILST), 239–259 (WLGQ…GLGA), 268–288 (IIAL…SMGF), 294–314 (FHLL…GAII), 337–357 (SACF…AGFY), 372–394 (NMFS…FRLV), 422–442 (MGLL…IFPF), 457–477 (LFVC…NLFF), 490–510 (FLGS…FYPL), and 552–572 (LKIY…LLFL).

This sequence belongs to the complex I subunit 5 family.

It is found in the mitochondrion inner membrane. The enzyme catalyses a ubiquinone + NADH + 5 H(+)(in) = a ubiquinol + NAD(+) + 4 H(+)(out). Functionally, core subunit of the mitochondrial membrane respiratory chain NADH dehydrogenase (Complex I) that is believed to belong to the minimal assembly required for catalysis. Complex I functions in the transfer of electrons from NADH to the respiratory chain. The immediate electron acceptor for the enzyme is believed to be ubiquinone. This chain is NADH-ubiquinone oxidoreductase chain 5 (mt:ND5), found in Drosophila melanogaster (Fruit fly).